The following is a 549-amino-acid chain: DNA ligase 1 (549 aa).

Glu212 is a binding site for ATP. Lys214 acts as the N6-AMP-lysine intermediate in catalysis. Arg219, Arg234, Glu264, Phe310, Arg387, and Lys393 together coordinate ATP.

The protein belongs to the ATP-dependent DNA ligase family. Requires Mg(2+) as cofactor.

It carries out the reaction ATP + (deoxyribonucleotide)n-3'-hydroxyl + 5'-phospho-(deoxyribonucleotide)m = (deoxyribonucleotide)n+m + AMP + diphosphate.. Its function is as follows. DNA ligase that seals nicks in double-stranded DNA during DNA replication, DNA recombination and DNA repair. The protein is DNA ligase 1 of Methanosarcina barkeri (strain Fusaro / DSM 804).